We begin with the raw amino-acid sequence, 122 residues long: Small ribosomal subunit protein uS13 (122 aa).

The interval 93–122 (RRSLPVRGQRTHTNARTRKGPAKPIAGKKK) is disordered.

Belongs to the universal ribosomal protein uS13 family. In terms of assembly, part of the 30S ribosomal subunit. Forms a loose heterodimer with protein S19. Forms two bridges to the 50S subunit in the 70S ribosome.

In terms of biological role, located at the top of the head of the 30S subunit, it contacts several helices of the 16S rRNA. In the 70S ribosome it contacts the 23S rRNA (bridge B1a) and protein L5 of the 50S subunit (bridge B1b), connecting the 2 subunits; these bridges are implicated in subunit movement. Contacts the tRNAs in the A and P-sites. The polypeptide is Small ribosomal subunit protein uS13 (Chelativorans sp. (strain BNC1)).